A 673-amino-acid chain; its full sequence is Protein kinase ORF74 (673 aa).

Residues 128-404 (TDTDEAVARG…ARELLVYPRY (277 aa)) form the Protein kinase domain. Asp-252 (proton acceptor) is an active-site residue. The segment at 340-364 (MDNDALDSRRTGRDGDPVNPEGFGT) is disordered. The segment covering 345-355 (LDSRRTGRDGD) has biased composition (basic and acidic residues).

Belongs to the protein kinase superfamily. Ser/Thr protein kinase family.

It carries out the reaction L-seryl-[protein] + ATP = O-phospho-L-seryl-[protein] + ADP + H(+). The catalysed reaction is L-threonyl-[protein] + ATP = O-phospho-L-threonyl-[protein] + ADP + H(+). The polypeptide is Protein kinase ORF74 (ORF74) (Ictalurid herpesvirus 1 (strain Auburn) (IcHV-1)).